Reading from the N-terminus, the 345-residue chain is Trans-3-hydroxy-L-proline dehydratase (345 aa).

Residue serine 90 is the Proton acceptor of the active site. Residues 91–92 (GS), aspartate 252, and 257–258 (GT) each bind substrate.

This sequence belongs to the proline racemase family.

The catalysed reaction is trans-3-hydroxy-L-proline = 1-pyrroline-2-carboxylate + H2O. Catalyzes the dehydration of trans-3-hydroxy-L-proline (t3LHyp) to Delta(1)-pyrroline-2-carboxylate (Pyr2C). May be involved in a degradation pathway that converts t3LHyp to L-proline, which would allow S.novella to grow on t3LHyp as a sole carbon source. The chain is Trans-3-hydroxy-L-proline dehydratase from Ancylobacter novellus (strain ATCC 8093 / DSM 506 / JCM 20403 / CCM 1077 / IAM 12100 / NBRC 12443 / NCIMB 10456) (Starkeya novella).